The sequence spans 177 residues: UPF0340 protein STH78 (177 aa).

The protein belongs to the UPF0340 family.

The chain is UPF0340 protein STH78 from Symbiobacterium thermophilum (strain DSM 24528 / JCM 14929 / IAM 14863 / T).